We begin with the raw amino-acid sequence, 362 residues long: MASGSAGKPTGEAASPAPASAIGGASSQPRKRLVSVCDHCKGKMQLVADLLLLSSEARPVLFEGPASSGAGAESFEQCRDTIIARTKGLSILTHDVQSQLNMGRFGEAGDSLVELGDLVVSLTECSAHAAYLAAVATPGAQPAQPGLVDRYRVTRCRHEVEQGCAVLRATPLADMTPQLLLEVSQGLSRNLKFLTDACALASDKSRDRFSREQFKLGVKCMSTSASALLACVREVKVAPSELARSRCALFSGPLVQAVSALVGFATEPQFLGRAAAVSAEGKAVQTAILGGAMSVVSACVLLTQCLRDLAQHPDGGAKMSDHRERLRNSACAVSEGCTLLSQALRERSSPRTLPPVNSNSVN.

The interval Met-1 to Ser-26 is disordered. At Ala-2 the chain carries N-acetylalanine. Over residues Ala-13–Ser-26 the composition is skewed to low complexity.

May homodimerize. Interacts with F-actin.

In terms of biological role, actin-binding protein which may have an oncogenic function and regulates cell proliferation, migration and invasion in cancer cells. The protein is Talin rod domain-containing protein 1 of Homo sapiens (Human).